A 245-amino-acid chain; its full sequence is tRNA pseudouridine synthase A (245 aa).

Asp52 (nucleophile) is an active-site residue. A substrate-binding site is contributed by Tyr111.

It belongs to the tRNA pseudouridine synthase TruA family. As to quaternary structure, homodimer.

It catalyses the reaction uridine(38/39/40) in tRNA = pseudouridine(38/39/40) in tRNA. Formation of pseudouridine at positions 38, 39 and 40 in the anticodon stem and loop of transfer RNAs. In Wolbachia pipientis subsp. Culex pipiens (strain wPip), this protein is tRNA pseudouridine synthase A.